The sequence spans 71 residues: DNA-directed RNA polymerase subunit omega (71 aa).

Belongs to the RNA polymerase subunit omega family. The RNAP catalytic core consists of 2 alpha, 1 beta, 1 beta' and 1 omega subunit. When a sigma factor is associated with the core the holoenzyme is formed, which can initiate transcription.

The catalysed reaction is RNA(n) + a ribonucleoside 5'-triphosphate = RNA(n+1) + diphosphate. In terms of biological role, promotes RNA polymerase assembly. Latches the N- and C-terminal regions of the beta' subunit thereby facilitating its interaction with the beta and alpha subunits. The chain is DNA-directed RNA polymerase subunit omega from Campylobacter curvus (strain 525.92).